The sequence spans 534 residues: Probable inorganic phosphate transporter 1-8 (534 aa).

The Cytoplasmic segment spans residues 1–21 (MPIKVLSSLDVARTQWYHFKA). The chain crosses the membrane as a helical span at residues 22 to 42 (IIVAGMGLFTDAYDLFCIAPV). Over 43 to 61 (MKMISHVYYNGDSINTAVL) the chain is Extracellular. A helical transmembrane segment spans residues 62–82 (STSYAIALLGTATGQLVFGYL). Topologically, residues 83-90 (GDRVGRRR) are cytoplasmic. Residues 91 to 111 (VYGLCLIIMILSSFGCGFSVC) form a helical membrane-spanning segment. At 112-123 (TTRRSCVMVSLG) the chain is on the extracellular side. A helical transmembrane segment spans residues 124 to 144 (FFRFFLGLGIGGDYPLSATIM). The Cytoplasmic segment spans residues 145 to 153 (SEFANKRTR). The helical transmembrane segment at 154-174 (GAFIAAVFSMQGLGILVSSAV) threads the bilayer. The Extracellular portion of the chain corresponds to 175 to 199 (TMAVCVAFKRSGGGLEVDAAAPTEA). Residues 200 to 220 (DLAWRLILMIGALPAALTFYW) traverse the membrane as a helical segment. Topologically, residues 221-281 (RMLMPETARY…KLFSRCFFRL (61 aa)) are cytoplasmic. The chain crosses the membrane as a helical span at residues 282–302 (HGRDLFAASFNWFLVDIVFYT). At 303–333 (SNLLLSHIFSHYSKKPSTAENVYDAAFEVAE) the chain is on the extracellular side. The chain crosses the membrane as a helical span at residues 334–354 (LGAIIAACSTIPGYWFTVYFI). The Cytoplasmic portion of the chain corresponds to 355–361 (DKIGRVK). Residues 362 to 382 (IQIMGFFFMAVIYLVAGIPYS) form a helical membrane-spanning segment. Over 383 to 396 (WYWSKHEHNNKGFM) the chain is Extracellular. A helical membrane pass occupies residues 397–417 (VLYGLVFFFCNFGPNTTTFII). Residues 418–431 (PAEHFPARFRSTCH) lie on the Cytoplasmic side of the membrane. A helical transmembrane segment spans residues 432-452 (GISGAAGKLGAIVGTVGFLWA). Residues 453 to 472 (TKKMESDDKNQIYPEVNRMR) lie on the Extracellular side of the membrane. A helical transmembrane segment spans residues 473-493 (IAFLILGGVCIAGILVTYFFT). The Cytoplasmic segment spans residues 494–534 (KETMGRSLEENEHDQDNNAESEDEPQIVDGQSSVSTLLQTR). The disordered stretch occupies residues 501 to 534 (LEENEHDQDNNAESEDEPQIVDGQSSVSTLLQTR). The segment covering 510-519 (NNAESEDEPQ) has biased composition (acidic residues). Serine 514 carries the phosphoserine modification. A compositionally biased stretch (polar residues) spans 522-534 (DGQSSVSTLLQTR).

It belongs to the major facilitator superfamily. Phosphate:H(+) symporter (TC 2.A.1.9) family. As to expression, in roots.

The protein localises to the membrane. In terms of biological role, high-affinity transporter for external inorganic phosphate. The chain is Probable inorganic phosphate transporter 1-8 (PHT1-8) from Arabidopsis thaliana (Mouse-ear cress).